The following is a 484-amino-acid chain: Serine hydroxymethyltransferase, cytosolic (484 aa).

A2 carries the N-acetylalanine modification. N6 carries the deamidated asparagine; alternate modification. Positions 6-7 (NG) form a cross-link, isoaspartyl glycine isopeptide (Asn-Gly); alternate. Residue C204 is the Nucleophile of the active site. The active-site Proton donor is H256. K257 bears the N6-(pyridoxal phosphate)lysine mark.

It belongs to the SHMT family. Homotetramer. Identified in complex with ABRAXAS2 and the other subunits of the BRISC complex, at least composed of ABRAXAS2, BRCC3/BRCC36, BABAM2 and BABAM1/NBA1. Pyridoxal 5'-phosphate is required as a cofactor. In terms of processing, deamidation of asparagine produces alternatively aspartate or isoaspartate, which in turn can be converted to aspartate through carboxylmethylation/demethylation.

Its subcellular location is the cytoplasm. The catalysed reaction is (6R)-5,10-methylene-5,6,7,8-tetrahydrofolate + glycine + H2O = (6S)-5,6,7,8-tetrahydrofolate + L-serine. The protein operates within one-carbon metabolism; tetrahydrofolate interconversion. Interconversion of serine and glycine. The sequence is that of Serine hydroxymethyltransferase, cytosolic (SHMT1) from Oryctolagus cuniculus (Rabbit).